The sequence spans 315 residues: MSLVEKNTASEDAFALSEATARDYLVLLKPRVMSLVVFTGLVGLVLAPGHMNPVLAVISILCIAVGAGASGALNMWYDADIDAVMKRTRKRPIPAGIIAPNQVLAFGLTLSAFSVMTLGLMVNWLAAALLAFTIFFYAVIYTMWLKRSTPQNIVIGGAAGAFPPMIGWAAATGEITWDSLVLFMIIFLWTPPHFWALSLFTTNDYEAARIPMMPNVKGELSTRRQALFYAVLMAPVGVLPWVMGFAGMFYGVVSTLLGLAFVYYAWRLWAADSQLQMLAAARKLFRFSLLYLAGIFAVLLFEALTFKLLAAFGVF.

The next 9 helical transmembrane spans lie at 32 to 52, 53 to 73, 93 to 113, 120 to 140, 153 to 173, 180 to 200, 226 to 246, 249 to 269, and 295 to 315; these read VMSL…GHMN, PVLA…SGAL, IPAG…LSAF, LMVN…YAVI, IVIG…AATG, LVLF…LSLF, ALFY…MGFA, FYGV…WRLW, and IFAV…FGVF.

This sequence belongs to the UbiA prenyltransferase family. Protoheme IX farnesyltransferase subfamily.

It is found in the cell inner membrane. It carries out the reaction heme b + (2E,6E)-farnesyl diphosphate + H2O = Fe(II)-heme o + diphosphate. Its pathway is porphyrin-containing compound metabolism; heme O biosynthesis; heme O from protoheme: step 1/1. Functionally, converts heme B (protoheme IX) to heme O by substitution of the vinyl group on carbon 2 of heme B porphyrin ring with a hydroxyethyl farnesyl side group. The sequence is that of Protoheme IX farnesyltransferase from Brucella suis (strain ATCC 23445 / NCTC 10510).